The primary structure comprises 255 residues: Thiazole synthase (255 aa).

Lys96 serves as the catalytic Schiff-base intermediate with DXP. Residues Gly157, 183 to 184 (AG), and 205 to 206 (NT) contribute to the 1-deoxy-D-xylulose 5-phosphate site.

It belongs to the ThiG family. Homotetramer. Forms heterodimers with either ThiH or ThiS.

It is found in the cytoplasm. It catalyses the reaction [ThiS sulfur-carrier protein]-C-terminal-Gly-aminoethanethioate + 2-iminoacetate + 1-deoxy-D-xylulose 5-phosphate = [ThiS sulfur-carrier protein]-C-terminal Gly-Gly + 2-[(2R,5Z)-2-carboxy-4-methylthiazol-5(2H)-ylidene]ethyl phosphate + 2 H2O + H(+). It participates in cofactor biosynthesis; thiamine diphosphate biosynthesis. Its function is as follows. Catalyzes the rearrangement of 1-deoxy-D-xylulose 5-phosphate (DXP) to produce the thiazole phosphate moiety of thiamine. Sulfur is provided by the thiocarboxylate moiety of the carrier protein ThiS. In vitro, sulfur can be provided by H(2)S. The sequence is that of Thiazole synthase from Bacillus pumilus (strain SAFR-032).